Here is a 257-residue protein sequence, read N- to C-terminus: Acetylglutamate kinase (257 aa).

Substrate is bound by residues 43 to 44, Arg-65, and Asn-157; that span reads GG. ATP is bound by residues 180–185 and 208–210; these read DVSGIL and IIT.

It belongs to the acetylglutamate kinase family. ArgB subfamily. As to quaternary structure, homodimer.

It localises to the cytoplasm. It carries out the reaction N-acetyl-L-glutamate + ATP = N-acetyl-L-glutamyl 5-phosphate + ADP. It participates in amino-acid biosynthesis; L-arginine biosynthesis; N(2)-acetyl-L-ornithine from L-glutamate: step 2/4. Functionally, catalyzes the ATP-dependent phosphorylation of N-acetyl-L-glutamate. The protein is Acetylglutamate kinase of Proteus mirabilis (strain HI4320).